Here is a 273-residue protein sequence, read N- to C-terminus: MGQKLSGSLKSVEVREPALRPAKRELRGAEPGRPARLDQLLDMPAAGLAVQLRHAWNPEDRSLNVFVKDDDRLTFHRHPVAQSTDGIRGKVGHARGLHAWQINWPARQRGTHAVVGVATARAPLHSVGYTALVGSDAESWGWDLGRSRLYHDGKNQPGVAYPAFLGPDEAFALPDSLLVVLDMDEGTLSFIVDGQYLGVAFRGLKGKKLYPVVSAVWGHCEVTMRYINGLDPEPLPLMDLCRRSIRSALGRQRLQDISSLPLPQSLKNYLQYQ.

Residues M1–P34 are disordered. Positions V12–P34 are enriched in basic and acidic residues. Residues P34–E233 enclose the B30.2/SPRY domain. Residues P234–Q273 enclose the SOCS box domain.

This sequence belongs to the SPSB family. As to quaternary structure, component of the probable ECS(SPSB4) E3 ubiquitin-protein ligase complex which contains CUL5, RNF7/RBX2, Elongin BC complex and SPSB4. Interacts with CUL5; RNF7; ELOB and ELOC. Interacts with MET. Interacts (via B30.2/SPRY domain) with PAWR; this interaction occurs in association with the Elongin BC complex. Interacts with NOS2. Interacts with EPHB2.

Its subcellular location is the cytoplasm. It is found in the cytosol. The protein operates within protein modification; protein ubiquitination. Its function is as follows. Substrate recognition component of a SCF-like ECS (Elongin BC-CUL2/5-SOCS-box protein) E3 ubiquitin-protein ligase complex which mediates the ubiquitination and subsequent proteasomal degradation of target proteins. Negatively regulates nitric oxide (NO) production and limits cellular toxicity in activated macrophages by mediating the ubiquitination and proteasomal degradation of NOS2. Acts as a bridge which links NOS2 with the ECS E3 ubiquitin ligase complex components ELOC and CUL5. Diminishes EphB2-dependent cell repulsive responses by mediating the ubiquitination and degradation of EphB2/CTF2. Regulates cellular clock function by mediating the ubiquitin/proteasome-dependent degradation of the circadian transcriptional repressor NR1D1. In Homo sapiens (Human), this protein is SPRY domain-containing SOCS box protein 4 (SPSB4).